The sequence spans 349 residues: Trans-enoyl reductase phmE (349 aa).

55-58 (CDWK) contacts NADP(+). 143-150 (TGIGTMGL) contacts substrate. Residues 182 to 185 (SPKN), tyrosine 200, and 247 to 248 (LE) contribute to the NADP(+) site. Position 267-271 (267-271 (GMAIL)) interacts with substrate. 336–337 (VS) contacts NADP(+).

Belongs to the zinc-containing alcohol dehydrogenase family. In terms of assembly, monomer.

Its pathway is mycotoxin biosynthesis. Trans-enoyl reductase; part of the gene cluster that mediates the biosynthesis of the mycotoxins phomacins, leucine-derived cytochalasans with potent actin polymerization-inhibitory activities and monocot-specific antigerminative activities. The first step in the pathway is catalyzed by the hybrid PKS-NRPS phmA, assisted by the enoyl reductase phmE, that are responsible for fusion of the leucine precursor and the polyketide backbone to produce a 2-pyrrolidone intermediate. The polyketide synthase module (PKS) of phmA is responsible for the synthesis of the polyketide backbone and the downstream nonribosomal peptide synthetase (NRPS) amidates the carboxyl end of the polyketide with the leucine precursor. Because phmA lacks a designated enoylreductase (ER) domain, the required activity is provided the enoyl reductase phmE. Reduction by the hydrolyase phmG, followed by dehydration and intra-molecular Diels-Alder cyclization by the Diels-Alderase phmD then yield the required isoindolone-fused macrocycle. A number of oxidative steps catalyzed by the tailoring cytochrome P450 monooxygenase phmB, the FAD-linked oxidoreductase phmC and the short-chain dehydrogenase/reductase phmF, are further required to afford the final products, phomacin D and phomacin E. The polypeptide is Trans-enoyl reductase phmE (Phaeosphaeria nodorum (strain SN15 / ATCC MYA-4574 / FGSC 10173) (Glume blotch fungus)).